The primary structure comprises 155 residues: Protein SprT-like (155 aa).

The region spanning 6–148 is the SprT-like domain; the sequence is LQRLVERVSL…VCGQCGGKLM (143 aa). Residue His67 coordinates Zn(2+). Residue Glu68 is part of the active site. Position 71 (His71) interacts with Zn(2+).

The protein belongs to the SprT family. The cofactor is Zn(2+).

The protein resides in the cytoplasm. The protein is Protein SprT-like of Geobacillus sp. (strain WCH70).